Here is a 542-residue protein sequence, read N- to C-terminus: Glucose-6-phosphate isomerase (542 aa).

The active-site Proton donor is Glu-353. Residues His-384 and Lys-508 contribute to the active site.

This sequence belongs to the GPI family.

It localises to the cytoplasm. It carries out the reaction alpha-D-glucose 6-phosphate = beta-D-fructose 6-phosphate. It participates in carbohydrate biosynthesis; gluconeogenesis. Its pathway is carbohydrate degradation; glycolysis; D-glyceraldehyde 3-phosphate and glycerone phosphate from D-glucose: step 2/4. Catalyzes the reversible isomerization of glucose-6-phosphate to fructose-6-phosphate. The protein is Glucose-6-phosphate isomerase of Corynebacterium efficiens (strain DSM 44549 / YS-314 / AJ 12310 / JCM 11189 / NBRC 100395).